The chain runs to 126 residues: Large ribosomal subunit protein bL12 (126 aa).

It belongs to the bacterial ribosomal protein bL12 family. Homodimer. Part of the ribosomal stalk of the 50S ribosomal subunit. Forms a multimeric L10(L12)X complex, where L10 forms an elongated spine to which 2 to 4 L12 dimers bind in a sequential fashion. Binds GTP-bound translation factors.

Forms part of the ribosomal stalk which helps the ribosome interact with GTP-bound translation factors. Is thus essential for accurate translation. This Koribacter versatilis (strain Ellin345) protein is Large ribosomal subunit protein bL12.